Reading from the N-terminus, the 198-residue chain is Nucleoid occlusion factor SlmA (198 aa).

The HTH tetR-type domain maps to R9–L70. Residues T33 to F52 constitute a DNA-binding region (H-T-H motif). Residues D119–K144 adopt a coiled-coil conformation.

Belongs to the nucleoid occlusion factor SlmA family. Homodimer. Interacts with FtsZ.

The protein localises to the cytoplasm. It is found in the nucleoid. Its function is as follows. Required for nucleoid occlusion (NO) phenomenon, which prevents Z-ring formation and cell division over the nucleoid. Acts as a DNA-associated cell division inhibitor that binds simultaneously chromosomal DNA and FtsZ, and disrupts the assembly of FtsZ polymers. SlmA-DNA-binding sequences (SBS) are dispersed on non-Ter regions of the chromosome, preventing FtsZ polymerization at these regions. The protein is Nucleoid occlusion factor SlmA of Sodalis glossinidius (strain morsitans).